Consider the following 87-residue polypeptide: Large ribosomal subunit protein bL31B (87 aa).

This sequence belongs to the bacterial ribosomal protein bL31 family. Type B subfamily. As to quaternary structure, part of the 50S ribosomal subunit.

The protein is Large ribosomal subunit protein bL31B of Klebsiella pneumoniae (strain 342).